Reading from the N-terminus, the 120-residue chain is Large ribosomal subunit protein uL29A (120 aa).

Phosphoserine is present on residues serine 13 and serine 50.

It belongs to the universal ribosomal protein uL29 family. Component of the large ribosomal subunit (LSU). Mature yeast ribosomes consist of a small (40S) and a large (60S) subunit. The 40S small subunit contains 1 molecule of ribosomal RNA (18S rRNA) and 33 different proteins (encoded by 57 genes). The large 60S subunit contains 3 rRNA molecules (25S, 5.8S and 5S rRNA) and 46 different proteins (encoded by 81 genes). uL29 is associated with the polypeptide exit tunnel.

It localises to the cytoplasm. Functionally, component of the ribosome, a large ribonucleoprotein complex responsible for the synthesis of proteins in the cell. The small ribosomal subunit (SSU) binds messenger RNAs (mRNAs) and translates the encoded message by selecting cognate aminoacyl-transfer RNA (tRNA) molecules. The large subunit (LSU) contains the ribosomal catalytic site termed the peptidyl transferase center (PTC), which catalyzes the formation of peptide bonds, thereby polymerizing the amino acids delivered by tRNAs into a polypeptide chain. The nascent polypeptides leave the ribosome through a tunnel in the LSU and interact with protein factors that function in enzymatic processing, targeting, and the membrane insertion of nascent chains at the exit of the ribosomal tunnel. This Saccharomyces cerevisiae (strain ATCC 204508 / S288c) (Baker's yeast) protein is Large ribosomal subunit protein uL29A.